Here is a 103-residue protein sequence, read N- to C-terminus: Mitochondrial import inner membrane translocase subunit TIM13 (103 aa).

The tract at residues 1 to 25 (MALSSIFGGGSPSQQSNLPTSSASS) is disordered. Residues 12–25 (PSQQSNLPTSSASS) show a composition bias toward polar residues. A Twin CX3C motif motif is present at residues 55–75 (CFEKCLMAPYTSKQDTCVDQC). Disulfide bonds link Cys-55-Cys-75 and Cys-59-Cys-71.

The protein belongs to the small Tim family. In terms of assembly, heterohexamer; composed of 3 copies of TIM8 and 3 copies of TIM13, named soluble 70 kDa complex. Associates with the TIM22 complex, whose core is composed of TIM22 and TIM54. Interacts with the transmembrane regions of multi-pass transmembrane proteins in transit.

It is found in the mitochondrion inner membrane. Mitochondrial intermembrane chaperone that participates in the import and insertion of some multi-pass transmembrane proteins into the mitochondrial inner membrane. Also required for the transfer of beta-barrel precursors from the TOM complex to the sorting and assembly machinery (SAM complex) of the outer membrane. Acts as a chaperone-like protein that protects the hydrophobic precursors from aggregation and guide them through the mitochondrial intermembrane space. The TIM8-TIM13 complex is non essential and only mediates the import of few proteins, while the predominant TIM9-TIM10 70 kDa complex is crucial and mediates the import of much more proteins. The sequence is that of Mitochondrial import inner membrane translocase subunit TIM13 (TIM13) from Eremothecium gossypii (strain ATCC 10895 / CBS 109.51 / FGSC 9923 / NRRL Y-1056) (Yeast).